Reading from the N-terminus, the 499-residue chain is Glycerol kinase (499 aa).

Position 13 (Thr-13) interacts with ADP. ATP contacts are provided by Thr-13, Thr-14, and Ser-15. Thr-13 provides a ligand contact to sn-glycerol 3-phosphate. Residue Arg-17 coordinates ADP. Sn-glycerol 3-phosphate contacts are provided by Arg-83, Glu-84, Tyr-135, and Asp-245. 5 residues coordinate glycerol: Arg-83, Glu-84, Tyr-135, Asp-245, and Gln-246. The ADP site is built by Thr-267 and Gly-310. ATP is bound by residues Thr-267, Gly-310, Gln-314, and Ala-411. Residues Ala-411 and Asn-415 each contribute to the ADP site.

The protein belongs to the FGGY kinase family.

The catalysed reaction is glycerol + ATP = sn-glycerol 3-phosphate + ADP + H(+). The protein operates within polyol metabolism; glycerol degradation via glycerol kinase pathway; sn-glycerol 3-phosphate from glycerol: step 1/1. Inhibited by fructose 1,6-bisphosphate (FBP). In terms of biological role, key enzyme in the regulation of glycerol uptake and metabolism. Catalyzes the phosphorylation of glycerol to yield sn-glycerol 3-phosphate. In Xylella fastidiosa (strain 9a5c), this protein is Glycerol kinase.